The chain runs to 211 residues: Imidazole glycerol phosphate synthase subunit HisH (211 aa).

In terms of domain architecture, Glutamine amidotransferase type-1 spans 3-211 (VIAVIDYDMG…VNQIRVKAIA (209 aa)). Catalysis depends on Cys-81, which acts as the Nucleophile. Active-site residues include His-186 and Glu-188.

Heterodimer of HisH and HisF.

The protein localises to the cytoplasm. The catalysed reaction is 5-[(5-phospho-1-deoxy-D-ribulos-1-ylimino)methylamino]-1-(5-phospho-beta-D-ribosyl)imidazole-4-carboxamide + L-glutamine = D-erythro-1-(imidazol-4-yl)glycerol 3-phosphate + 5-amino-1-(5-phospho-beta-D-ribosyl)imidazole-4-carboxamide + L-glutamate + H(+). It catalyses the reaction L-glutamine + H2O = L-glutamate + NH4(+). It functions in the pathway amino-acid biosynthesis; L-histidine biosynthesis; L-histidine from 5-phospho-alpha-D-ribose 1-diphosphate: step 5/9. IGPS catalyzes the conversion of PRFAR and glutamine to IGP, AICAR and glutamate. The HisH subunit catalyzes the hydrolysis of glutamine to glutamate and ammonia as part of the synthesis of IGP and AICAR. The resulting ammonia molecule is channeled to the active site of HisF. The protein is Imidazole glycerol phosphate synthase subunit HisH of Gloeothece citriformis (strain PCC 7424) (Cyanothece sp. (strain PCC 7424)).